The sequence spans 313 residues: Olfactory receptor 5H1 (313 aa).

At 1-28 the chain is on the extracellular side; sequence MEEENATLLTEFVLTGFLYQPQWKIPLF. The N-linked (GlcNAc...) asparagine glycan is linked to Asn5. The chain crosses the membrane as a helical span at residues 29 to 49; sequence LAFLVIYLITIMGNLGLIAVI. At 50–56 the chain is on the cytoplasmic side; it reads WKDPHLH. A helical membrane pass occupies residues 57 to 77; it reads IPMYLLLGNLAFVDAWISSTV. Residues 78 to 98 are Extracellular-facing; sequence TPKMLNNFLAKSKMISLSECK. Cys97 and Cys179 form a disulfide bridge. A helical transmembrane segment spans residues 99–119; that stretch reads IQFFSFAISVTTECFLLATMA. Residues 120 to 143 lie on the Cytoplasmic side of the membrane; the sequence is YDRYVAICKPLLYPAIMTNGLCIR. A helical transmembrane segment spans residues 144-164; sequence LLILSYVGGILHALIHEGFLF. Residues 165–195 are Extracellular-facing; sequence RLTFCNSNIVHHIYCDTIPLSKISCTDSSIN. The helical transmembrane segment at 196 to 216 threads the bilayer; sequence FLMVFIFSGSIQVFSIVTILV. The Cytoplasmic portion of the chain corresponds to 217 to 240; sequence SYTFVLFAILKKKSDKGVRKAFST. Residues 241-261 traverse the membrane as a helical segment; that stretch reads CGAHLFSVSLYYGPLLFIYVG. Residues 262–271 lie on the Extracellular side of the membrane; sequence PASPQADDQD. A helical membrane pass occupies residues 272–292; that stretch reads MVEPLFYTVIIPLLNPIIYSL. Residues 293 to 313 are Cytoplasmic-facing; the sequence is RNKQVTVSFTKMLKKHVKVSY.

Belongs to the G-protein coupled receptor 1 family.

The protein resides in the cell membrane. Its function is as follows. Odorant receptor. In Homo sapiens (Human), this protein is Olfactory receptor 5H1 (OR5H1).